Reading from the N-terminus, the 362-residue chain is DNA replication and repair protein RecF (362 aa).

30 to 37 (GPNGSGKT) provides a ligand contact to ATP.

Belongs to the RecF family.

The protein resides in the cytoplasm. Its function is as follows. The RecF protein is involved in DNA metabolism; it is required for DNA replication and normal SOS inducibility. RecF binds preferentially to single-stranded, linear DNA. It also seems to bind ATP. The chain is DNA replication and repair protein RecF from Proteus mirabilis (strain HI4320).